A 313-amino-acid polypeptide reads, in one-letter code: Porphobilinogen deaminase (313 aa).

The residue at position 242 (C242) is an S-(dipyrrolylmethanemethyl)cysteine.

This sequence belongs to the HMBS family. In terms of assembly, monomer. Requires dipyrromethane as cofactor.

It carries out the reaction 4 porphobilinogen + H2O = hydroxymethylbilane + 4 NH4(+). It participates in porphyrin-containing compound metabolism; protoporphyrin-IX biosynthesis; coproporphyrinogen-III from 5-aminolevulinate: step 2/4. Tetrapolymerization of the monopyrrole PBG into the hydroxymethylbilane pre-uroporphyrinogen in several discrete steps. In Pseudomonas aeruginosa (strain UCBPP-PA14), this protein is Porphobilinogen deaminase.